A 289-amino-acid chain; its full sequence is DDRGK domain-containing protein 1 (289 aa).

The Lumenal portion of the chain corresponds to 1-2 (MD). Residues 3–23 (PFILAAIISGIVIIILSIAFL) traverse the membrane as a helical segment. The Cytoplasmic portion of the chain corresponds to 24-289 (RVSQVKPQAA…LINLAPVTVP (266 aa)). The disordered stretch occupies residues 65–168 (RHQAALEEEP…DERKKREQEE (104 aa)). The segment covering 70–85 (LEEEPEIQEEADEGAP) has biased composition (acidic residues). Over residues 87–166 (IDQKIDFDDK…AEDERKKREQ (80 aa)) the composition is skewed to basic and acidic residues.

Belongs to the DDRGK1 family. In terms of assembly, interacts with Atg9; the interaction is transient.

The protein localises to the endoplasmic reticulum membrane. Substrate adapter for ufmylation, the covalent attachment of the ubiquitin-like modifier UFM1 to substrate proteins. Required for ufmylation of Atg9; protects the nervous system during aging, possibly by stabilizing Atg9 and supporting its function. The protein is DDRGK domain-containing protein 1 of Bombyx mori (Silk moth).